The sequence spans 579 residues: Tyrosine 3-monooxygenase (579 aa).

A compositionally biased stretch (acidic residues) spans 105-114; sequence VEFESVEQEQ. Residues 105-132 form a disordered region; that stretch reads VEFESVEQEQSESQSQEPEGNQQPTKND. Fe cation contacts are provided by H409, H414, and E454.

Belongs to the biopterin-dependent aromatic amino acid hydroxylase family. The cofactor is Fe(2+).

Its subcellular location is the cytoplasm. It localises to the perinuclear region. The protein localises to the cell projection. The protein resides in the axon. It catalyses the reaction (6R)-L-erythro-5,6,7,8-tetrahydrobiopterin + L-tyrosine + O2 = (4aS,6R)-4a-hydroxy-L-erythro-5,6,7,8-tetrahydrobiopterin + L-dopa. Its pathway is catecholamine biosynthesis; dopamine biosynthesis; dopamine from L-tyrosine: step 1/2. Its activity is regulated as follows. Phosphorylation leads to an increase in the catalytic activity. Its function is as follows. Plays an important role in the physiology of adrenergic neurons. This is Tyrosine 3-monooxygenase (ple) from Drosophila melanogaster (Fruit fly).